The sequence spans 93 residues: Small ribosomal subunit protein bS18 (93 aa).

Belongs to the bacterial ribosomal protein bS18 family. As to quaternary structure, part of the 30S ribosomal subunit. Forms a tight heterodimer with protein bS6.

Binds as a heterodimer with protein bS6 to the central domain of the 16S rRNA, where it helps stabilize the platform of the 30S subunit. This chain is Small ribosomal subunit protein bS18, found in Acidovorax ebreus (strain TPSY) (Diaphorobacter sp. (strain TPSY)).